A 363-amino-acid chain; its full sequence is Flagellar P-ring protein (363 aa).

The first 20 residues, 1-20 (MKYRLIVALAMLVLSLPSQA), serve as a signal peptide directing secretion.

The protein belongs to the FlgI family. In terms of assembly, the basal body constitutes a major portion of the flagellar organelle and consists of four rings (L,P,S, and M) mounted on a central rod.

Its subcellular location is the periplasm. It localises to the bacterial flagellum basal body. In terms of biological role, assembles around the rod to form the L-ring and probably protects the motor/basal body from shearing forces during rotation. This chain is Flagellar P-ring protein, found in Shewanella sp. (strain ANA-3).